A 296-amino-acid chain; its full sequence is NAD kinase (296 aa).

Catalysis depends on aspartate 72, which acts as the Proton acceptor. NAD(+) contacts are provided by residues 72–73 (DG), 146–147 (ND), arginine 157, lysine 174, aspartate 176, 187–192 (TAYALS), and glutamine 247.

It belongs to the NAD kinase family. A divalent metal cation serves as cofactor.

The protein localises to the cytoplasm. It carries out the reaction NAD(+) + ATP = ADP + NADP(+) + H(+). Functionally, involved in the regulation of the intracellular balance of NAD and NADP, and is a key enzyme in the biosynthesis of NADP. Catalyzes specifically the phosphorylation on 2'-hydroxyl of the adenosine moiety of NAD to yield NADP. The sequence is that of NAD kinase from Pseudomonas syringae pv. tomato (strain ATCC BAA-871 / DC3000).